The primary structure comprises 163 residues: Nucleotide-binding protein CYB_0891 (163 aa).

Belongs to the YajQ family.

Functionally, nucleotide-binding protein. In Synechococcus sp. (strain JA-2-3B'a(2-13)) (Cyanobacteria bacterium Yellowstone B-Prime), this protein is Nucleotide-binding protein CYB_0891.